The chain runs to 200 residues: Holliday junction branch migration complex subunit RuvA (200 aa).

The tract at residues 1-65 is domain I; it reads MYEYIKGTLT…ETEHVLYGFS (65 aa). The segment at 66 to 144 is domain II; sequence SRAEKECFRL…TLMPLYLEEP (79 aa). The segment at 145–149 is flexible linker; it reads VVPSS. Residues 150-200 are domain III; that stretch reads TANSSFKEGIGALMNLGFSRLAADRMMTEAVKELSEEASVAELLPIALRKS.

The protein belongs to the RuvA family. In terms of assembly, homotetramer. Forms an RuvA(8)-RuvB(12)-Holliday junction (HJ) complex. HJ DNA is sandwiched between 2 RuvA tetramers; dsDNA enters through RuvA and exits via RuvB. An RuvB hexamer assembles on each DNA strand where it exits the tetramer. Each RuvB hexamer is contacted by two RuvA subunits (via domain III) on 2 adjacent RuvB subunits; this complex drives branch migration. In the full resolvosome a probable DNA-RuvA(4)-RuvB(12)-RuvC(2) complex forms which resolves the HJ.

It is found in the cytoplasm. Functionally, the RuvA-RuvB-RuvC complex processes Holliday junction (HJ) DNA during genetic recombination and DNA repair, while the RuvA-RuvB complex plays an important role in the rescue of blocked DNA replication forks via replication fork reversal (RFR). RuvA specifically binds to HJ cruciform DNA, conferring on it an open structure. The RuvB hexamer acts as an ATP-dependent pump, pulling dsDNA into and through the RuvAB complex. HJ branch migration allows RuvC to scan DNA until it finds its consensus sequence, where it cleaves and resolves the cruciform DNA. The polypeptide is Holliday junction branch migration complex subunit RuvA (Chlamydia trachomatis serovar A (strain ATCC VR-571B / DSM 19440 / HAR-13)).